Here is a 544-residue protein sequence, read N- to C-terminus: Ribosomal oxygenase 1 (544 aa).

The segment at 1–78 (MERKHMSALS…HEGERDCREM (78 aa)) is disordered. Residues 10-19 (SIYQSLSGGK) are compositionally biased toward polar residues. The segment covering 42-53 (PSKKATKKKGTK) has biased composition (basic residues). A compositionally biased stretch (basic and acidic residues) spans 63-78 (SSEKEKHEGERDCREM). Residues 197–342 (CSIRMLNPQA…DLMLKLMPAA (146 aa)) enclose the JmjC domain. The Fe cation site is built by histidine 243, aspartate 245, and histidine 308.

It belongs to the ROX family. NO66 subfamily. Fe(2+) is required as a cofactor.

Its subcellular location is the nucleus. The protein localises to the nucleolus. It is found in the nucleoplasm. It catalyses the reaction N(6),N(6)-dimethyl-L-lysyl(36)-[histone H3] + 2 2-oxoglutarate + 2 O2 = L-lysyl(36)-[histone H3] + 2 formaldehyde + 2 succinate + 2 CO2. It carries out the reaction N(6)-methyl-L-lysyl-[protein] + 2-oxoglutarate + O2 = L-lysyl-[protein] + formaldehyde + succinate + CO2. The enzyme catalyses L-histidyl-[protein] + 2-oxoglutarate + O2 = (3S)-3-hydroxy-L-histidyl-[protein] + succinate + CO2. Its function is as follows. Oxygenase that can act as both a histone lysine demethylase and a ribosomal histidine hydroxylase. Specifically demethylates 'Lys-4' (H3K4me) and 'Lys-36' (H3K36me) of histone H3, thereby playing a central role in histone code. Preferentially demethylates trimethylated H3 'Lys-4' (H3K4me3) and monomethylated H3 'Lys-4' (H3K4me1) residues, while it has weaker activity for dimethylated H3 'Lys-36' (H3K36me2). Also catalyzes demethylation of non-histone proteins. Also catalyzes the hydroxylation of 60S ribosomal protein L8 on 'His-216', thereby playing a role in ribosome biogenesis. In Danio rerio (Zebrafish), this protein is Ribosomal oxygenase 1 (riox1).